Consider the following 217-residue polypeptide: MAAICLPVAKHSFPSLLNTQTPKPLFSQNLHTIPLSSQSQICGLKFLISSPSSLPPPPSYSARISVFAKVSKGSVPPQFTLKDQDGKNVSLTEFKGKPVVVYFYPADETPGCTKQACAFRDSYEKFKKAGAEVIGISGDDPSSHKAFAKKYRLPYTLLSDEGNKIRREWGVPADLFGTLPGRQTYVLDKNGTVQLIYNNQFQPEKHIDETLKFLQSA.

The transit peptide at 1 to 65 (MAAICLPVAK…PPPSYSARIS (65 aa)) directs the protein to the chloroplast. In terms of domain architecture, Thioredoxin spans 70–217 (VSKGSVPPQF…DETLKFLQSA (148 aa)). The Cysteine sulfenic acid (-SOH) intermediate role is filled by Cys-112. Cysteines 112 and 117 form a disulfide.

Belongs to the peroxiredoxin family. BCP/PrxQ subfamily. Monomer. As to expression, expressed in the leaves, roots and stems.

The protein resides in the plastid. The protein localises to the chloroplast thylakoid lumen. The catalysed reaction is a hydroperoxide + [thioredoxin]-dithiol = an alcohol + [thioredoxin]-disulfide + H2O. Functionally, thiol-specific peroxidase that catalyzes the reduction of hydrogen peroxide and organic hydroperoxides to water and alcohols, respectively. Plays a role in cell protection against oxidative stress by detoxifying peroxides. Involved in both resistance against fungal disease and oxidative stress. In Gentiana triflora (Clustered gentian), this protein is Peroxiredoxin Q, chloroplastic (AFP1).